Here is a 210-residue protein sequence, read N- to C-terminus: Large ribosomal subunit protein uL3 (210 aa).

The protein belongs to the universal ribosomal protein uL3 family. As to quaternary structure, part of the 50S ribosomal subunit. Forms a cluster with proteins L14 and L19.

In terms of biological role, one of the primary rRNA binding proteins, it binds directly near the 3'-end of the 23S rRNA, where it nucleates assembly of the 50S subunit. The sequence is that of Large ribosomal subunit protein uL3 from Lawsonia intracellularis (strain PHE/MN1-00).